A 324-amino-acid polypeptide reads, in one-letter code: Succinylglutamate desuccinylase (324 aa).

Zn(2+) is bound by residues His53, Glu56, and His148. Glu211 is an active-site residue.

The protein belongs to the AspA/AstE family. Succinylglutamate desuccinylase subfamily. Zn(2+) serves as cofactor.

It carries out the reaction N-succinyl-L-glutamate + H2O = L-glutamate + succinate. Its pathway is amino-acid degradation; L-arginine degradation via AST pathway; L-glutamate and succinate from L-arginine: step 5/5. In terms of biological role, transforms N(2)-succinylglutamate into succinate and glutamate. The chain is Succinylglutamate desuccinylase from Acinetobacter baumannii (strain AB0057).